We begin with the raw amino-acid sequence, 72 residues long: Translation initiation factor IF-1 (72 aa).

The S1-like domain maps to 1–72 (MSKEDMIEFS…SKGRITFRFK (72 aa)).

It belongs to the IF-1 family. In terms of assembly, component of the 30S ribosomal translation pre-initiation complex which assembles on the 30S ribosome in the order IF-2 and IF-3, IF-1 and N-formylmethionyl-tRNA(fMet); mRNA recruitment can occur at any time during PIC assembly.

It is found in the cytoplasm. In terms of biological role, one of the essential components for the initiation of protein synthesis. Stabilizes the binding of IF-2 and IF-3 on the 30S subunit to which N-formylmethionyl-tRNA(fMet) subsequently binds. Helps modulate mRNA selection, yielding the 30S pre-initiation complex (PIC). Upon addition of the 50S ribosomal subunit IF-1, IF-2 and IF-3 are released leaving the mature 70S translation initiation complex. The protein is Translation initiation factor IF-1 of Gluconacetobacter diazotrophicus (strain ATCC 49037 / DSM 5601 / CCUG 37298 / CIP 103539 / LMG 7603 / PAl5).